The chain runs to 274 residues: Ribose-5-phosphate isomerase (274 aa).

This sequence belongs to the ribose 5-phosphate isomerase family.

It is found in the cytoplasm. The enzyme catalyses aldehydo-D-ribose 5-phosphate = D-ribulose 5-phosphate. It functions in the pathway carbohydrate degradation; pentose phosphate pathway; D-ribose 5-phosphate from D-ribulose 5-phosphate (non-oxidative stage): step 1/1. The polypeptide is Ribose-5-phosphate isomerase (rki1) (Schizosaccharomyces pombe (strain 972 / ATCC 24843) (Fission yeast)).